A 206-amino-acid chain; its full sequence is Imidazoleglycerol-phosphate dehydratase (206 aa).

Belongs to the imidazoleglycerol-phosphate dehydratase family.

It localises to the cytoplasm. The enzyme catalyses D-erythro-1-(imidazol-4-yl)glycerol 3-phosphate = 3-(imidazol-4-yl)-2-oxopropyl phosphate + H2O. It participates in amino-acid biosynthesis; L-histidine biosynthesis; L-histidine from 5-phospho-alpha-D-ribose 1-diphosphate: step 6/9. The sequence is that of Imidazoleglycerol-phosphate dehydratase from Saccharopolyspora erythraea (strain ATCC 11635 / DSM 40517 / JCM 4748 / NBRC 13426 / NCIMB 8594 / NRRL 2338).